Consider the following 537-residue polypeptide: Hexosyltransferase GAUT11 (537 aa).

Topologically, residues 1–16 (MRRWPVDHRRRGRRRL) are cytoplasmic. The helical; Signal-anchor for type II membrane protein transmembrane segment at 17–37 (SSWIWFLLGSFSVAGLVLFIV) threads the bilayer. The Lumenal portion of the chain corresponds to 38-537 (QHYHHQQDPS…HPYLQDCVTA (500 aa)). Residues Asn66, Asn247, Asn299, Asn403, Asn436, and Asn525 are each glycosylated (N-linked (GlcNAc...) asparagine).

Belongs to the glycosyltransferase 8 family. Monomer. In terms of tissue distribution, expressed in roots, inflorescences, siliques, seeds, leaves and stems.

It is found in the golgi apparatus membrane. It carries out the reaction [(1-&gt;4)-alpha-D-galacturonosyl](n) + UDP-alpha-D-galacturonate = [(1-&gt;4)-alpha-D-galacturonosyl](n+1) + UDP + H(+). It functions in the pathway glycan metabolism; pectin biosynthesis. Functionally, glycosyltransferase involved in pectin and/or xylans biosynthesis in cell walls. Required for the biosynthesis of pectin in seed coat epidermal (SCE) cells. Collaboratively with MUCI70, essential for the accumulation of seed mucilage, a gelatinous wall rich in unbranched rhamnogalacturonan I (RG I), and for shaping the surface morphology of seeds. Catalyzes homogalacturonan (HG) elongation by acting as an HG alpha-1,4 galacturonic acid transferase. The polypeptide is Hexosyltransferase GAUT11 (Arabidopsis thaliana (Mouse-ear cress)).